The primary structure comprises 172 residues: Adenine phosphoribosyltransferase (172 aa).

This sequence belongs to the purine/pyrimidine phosphoribosyltransferase family. As to quaternary structure, homodimer.

It is found in the cytoplasm. The enzyme catalyses AMP + diphosphate = 5-phospho-alpha-D-ribose 1-diphosphate + adenine. The protein operates within purine metabolism; AMP biosynthesis via salvage pathway; AMP from adenine: step 1/1. Its function is as follows. Catalyzes a salvage reaction resulting in the formation of AMP, that is energically less costly than de novo synthesis. The sequence is that of Adenine phosphoribosyltransferase from Staphylococcus saprophyticus subsp. saprophyticus (strain ATCC 15305 / DSM 20229 / NCIMB 8711 / NCTC 7292 / S-41).